The sequence spans 648 residues: Probable potassium transport system protein Kup 1 (648 aa).

A run of 12 helical transmembrane segments spans residues 25 to 45 (LTLG…IYAF), 57 to 77 (IVAG…ILVV), 113 to 133 (LVMA…VITP), 153 to 173 (SVSR…LFLM), 184 to 204 (LFGP…LIHI), 219 to 239 (GVLF…AVFL), 263 to 283 (WLAI…AFAL), 312 to 332 (IPLV…VITG), 362 to 382 (IYLP…VLGF), 391 to 411 (AYGV…FLVV), 417 to 437 (WGWP…LFFF), and 446 to 466 (EGGW…VTWV).

The protein belongs to the HAK/KUP transporter (TC 2.A.72) family.

It is found in the cell inner membrane. The enzyme catalyses K(+)(in) + H(+)(in) = K(+)(out) + H(+)(out). In terms of biological role, transport of potassium into the cell. Likely operates as a K(+):H(+) symporter. The chain is Probable potassium transport system protein Kup 1 from Rhizorhabdus wittichii (strain DSM 6014 / CCUG 31198 / JCM 15750 / NBRC 105917 / EY 4224 / RW1) (Sphingomonas wittichii).